The chain runs to 302 residues: Short-chain dehydrogenase/reductase 1 (302 aa).

Residues Asn20 to Leu23, Arg43, Asp71 to Val72, and Asn98 contribute to the NADP(+) site. Ser170 contributes to the substrate binding site. NADP(+) is bound by residues Tyr226, Lys230, and Val257–Asn262. Residue Tyr226 is the Proton acceptor of the active site.

This sequence belongs to the short-chain dehydrogenases/reductases (SDR) family. Mainly expressed in flowers and flower buds, to a lesser extent in leaves and, at low levels, in stems and roots.

The protein operates within secondary metabolite biosynthesis; terpenoid biosynthesis. Its function is as follows. Component of the oleanane-type triterpene saponins (e.g. saponarioside A and saponarioside B) biosynthetic pathway, leading to the production of natural products with detergent properties used as traditional sources of soap. A dehydrogenase/reductase that, together with UGT74CD1, mediates the conversion of QA-tri to QA-triF; UGT74CD1 may transfer 4-keto-6-deoxy-glucose to QA-tri, which is in turn reduced to D-fucose by SDR1, thus leading to QA-triF formation via the initiation of the C-28 sugar chain. This chain is Short-chain dehydrogenase/reductase 1, found in Saponaria officinalis (Common soapwort).